Consider the following 231-residue polypeptide: UMP-CMP kinase (231 aa).

57 to 62 (GSGKGT) contributes to the ATP binding site. The segment at 77–106 (SAGDLLRREIASGSAYGSVILSTIREGKIV) is NMP. A ribonucleoside 5'-phosphate contacts are provided by residues Arg83, 104–106 (KIV), and 131–134 (GFPR). Position 138 (Asn138) interacts with CMP. Residues 169 to 177 (NRNQGRVDD) are LID. Residue Arg170 participates in ATP binding. A ribonucleoside 5'-phosphate-binding residues include Arg174 and Arg185. An ATP-binding site is contributed by Gly213.

Belongs to the adenylate kinase family. UMP-CMP kinase subfamily. In terms of assembly, monomer. Requires Mg(2+) as cofactor.

The protein resides in the cytoplasm. It localises to the nucleus. It catalyses the reaction CMP + ATP = CDP + ADP. It carries out the reaction dCMP + ATP = dCDP + ADP. The enzyme catalyses UMP + ATP = UDP + ADP. In terms of biological role, catalyzes the phosphorylation of pyrimidine nucleoside monophosphates at the expense of ATP. Plays an important role in de novo pyrimidine nucleotide biosynthesis. Has preference for UMP and CMP as phosphate acceptors. In Prunus armeniaca (Apricot), this protein is UMP-CMP kinase.